The primary structure comprises 133 residues: MAKEFGRPQRVAQEMQKEIAIILQREIKDPRVGLMTTVSGVEVSRDLAYAKVFVTFLNDKDEAAVKAGIKALQDASGFIRSLLGKAMRLRIVPELTFFYDNSLVEGMRMSNLVTSVVKHDEERRVNPDDDKEE.

It belongs to the RbfA family. In terms of assembly, monomer. Binds 30S ribosomal subunits, but not 50S ribosomal subunits or 70S ribosomes.

The protein localises to the cytoplasm. Its function is as follows. One of several proteins that assist in the late maturation steps of the functional core of the 30S ribosomal subunit. Associates with free 30S ribosomal subunits (but not with 30S subunits that are part of 70S ribosomes or polysomes). Required for efficient processing of 16S rRNA. May interact with the 5'-terminal helix region of 16S rRNA. The polypeptide is Ribosome-binding factor A (Cronobacter sakazakii (strain ATCC BAA-894) (Enterobacter sakazakii)).